We begin with the raw amino-acid sequence, 64 residues long: Large ribosomal subunit protein bL28 (64 aa).

Belongs to the bacterial ribosomal protein bL28 family.

This is Large ribosomal subunit protein bL28 from Campylobacter jejuni subsp. doylei (strain ATCC BAA-1458 / RM4099 / 269.97).